Here is a 322-residue protein sequence, read N- to C-terminus: Ribosome biogenesis protein RLP7 (322 aa).

Positions 1–16 are enriched in polar residues; the sequence is MSSTQDSKAQTLNSNP. The disordered stretch occupies residues 1-52; sequence MSSTQDSKAQTLNSNPEILLRKRRNADRTRIERQELAKKKREEQIKKKRSNK. S2 bears the N-acetylserine mark. Phosphoserine is present on S14. A compositionally biased stretch (basic and acidic residues) spans 26–45; it reads ADRTRIERQELAKKKREEQI. Phosphothreonine is present on T120. S278 bears the Phosphoserine mark.

It belongs to the universal ribosomal protein uL30 family.

It is found in the nucleus. The protein localises to the nucleolus. In terms of biological role, involved in the biogenesis of the 60S ribosomal subunit. May act as a specificity factor that binds precursor rRNAs and tethers the enzymes that carry out the early 5' to 3' exonucleolytic reactions that generate the mature rRNAs. The protein is Ribosome biogenesis protein RLP7 (RLP7) of Saccharomyces cerevisiae (strain ATCC 204508 / S288c) (Baker's yeast).